The primary structure comprises 246 residues: 5-oxoprolinase subunit A (246 aa).

Belongs to the LamB/PxpA family. Forms a complex composed of PxpA, PxpB and PxpC.

It catalyses the reaction 5-oxo-L-proline + ATP + 2 H2O = L-glutamate + ADP + phosphate + H(+). Catalyzes the cleavage of 5-oxoproline to form L-glutamate coupled to the hydrolysis of ATP to ADP and inorganic phosphate. The sequence is that of 5-oxoprolinase subunit A from Cupriavidus necator (strain ATCC 17699 / DSM 428 / KCTC 22496 / NCIMB 10442 / H16 / Stanier 337) (Ralstonia eutropha).